The chain runs to 226 residues: Thymidylate kinase (226 aa).

20–27 (GGEGAGKS) lines the ATP pocket.

Belongs to the thymidylate kinase family.

The catalysed reaction is dTMP + ATP = dTDP + ADP. Its function is as follows. Phosphorylation of dTMP to form dTDP in both de novo and salvage pathways of dTTP synthesis. This is Thymidylate kinase from Bradyrhizobium sp. (strain BTAi1 / ATCC BAA-1182).